The chain runs to 123 residues: Small ribosomal subunit protein bS6 (123 aa).

A disordered region spans residues 102–123; it reads MLKQKEERAPRREAEAKEFAAE. The span at 104 to 123 shows a compositional bias: basic and acidic residues; that stretch reads KQKEERAPRREAEAKEFAAE.

This sequence belongs to the bacterial ribosomal protein bS6 family.

Binds together with bS18 to 16S ribosomal RNA. This chain is Small ribosomal subunit protein bS6, found in Vibrio vulnificus (strain CMCP6).